The sequence spans 257 residues: MVLIRVLANLLILQLSYAQKSSELVVGGLPCNINEHRFLVLVYSDGIQCGGTLINKEWMLTAAHCDGKKMKLQFGLHSKNVPNKDKQTRVPKKKYFFPCSKNFTKWDKDIMLIRLNHPVNNSTHIAPLSLPSKPPSQDTVCNIMGWGTISPTKEIYPDVPHCAYINIVDHAVCRAFYPGLLEKSKTLCAGILEGGKDTCQGDSGGPLICNGQIQGIVSVGGDPCAEPRVSVLYTKVFDHLDWIKSIIAGNTAATCPL.

An N-terminal signal peptide occupies residues 1-18 (MVLIRVLANLLILQLSYA). The propeptide occupies 19–24 (QKSSEL). Residues 25 to 248 (VVGGLPCNIN…HLDWIKSIIA (224 aa)) form the Peptidase S1 domain. Disulfide bonds link cysteine 31–cysteine 162, cysteine 49–cysteine 65, cysteine 141–cysteine 209, cysteine 173–cysteine 188, and cysteine 199–cysteine 224. Residue histidine 64 is the Charge relay system of the active site. Asparagine 102 is a glycosylation site (N-linked (GlcNAc...) asparagine). Aspartate 109 acts as the Charge relay system in catalysis. Asparagine 120 and asparagine 121 each carry an N-linked (GlcNAc...) asparagine glycan. Serine 203 (charge relay system) is an active-site residue.

The protein belongs to the peptidase S1 family. Snake venom subfamily. As to quaternary structure, monomer. Expressed by the venom gland.

Its subcellular location is the secreted. In terms of biological role, snake venom serine protease that may act in the hemostasis system of the prey. This is Snake venom serine protease KN8 from Trimeresurus stejnegeri (Chinese green tree viper).